The primary structure comprises 136 residues: Peptide deformylase (136 aa).

Fe cation is bound by residues C85 and H126. Residue E127 is part of the active site. Residue H130 coordinates Fe cation.

It belongs to the polypeptide deformylase family. It depends on Fe(2+) as a cofactor.

It carries out the reaction N-terminal N-formyl-L-methionyl-[peptide] + H2O = N-terminal L-methionyl-[peptide] + formate. In terms of biological role, removes the formyl group from the N-terminal Met of newly synthesized proteins. Requires at least a dipeptide for an efficient rate of reaction. N-terminal L-methionine is a prerequisite for activity but the enzyme has broad specificity at other positions. The polypeptide is Peptide deformylase (Clostridium beijerinckii (strain ATCC 51743 / NCIMB 8052) (Clostridium acetobutylicum)).